Consider the following 487-residue polypeptide: Glycogen synthase 2 (487 aa).

ADP-alpha-D-glucose is bound at residue lysine 12.

It belongs to the glycosyltransferase 1 family. Bacterial/plant glycogen synthase subfamily.

It catalyses the reaction [(1-&gt;4)-alpha-D-glucosyl](n) + ADP-alpha-D-glucose = [(1-&gt;4)-alpha-D-glucosyl](n+1) + ADP + H(+). It functions in the pathway glycan biosynthesis; glycogen biosynthesis. Functionally, synthesizes alpha-1,4-glucan chains using ADP-glucose. This is Glycogen synthase 2 from Methylococcus capsulatus (strain ATCC 33009 / NCIMB 11132 / Bath).